A 543-amino-acid polypeptide reads, in one-letter code: Chaperonin GroEL (543 aa).

ATP contacts are provided by residues 29–32 (TLGP), 86–90 (DGTTT), G413, 477–479 (DAL), and D493.

Belongs to the chaperonin (HSP60) family. As to quaternary structure, forms a cylinder of 14 subunits composed of two heptameric rings stacked back-to-back. Interacts with the co-chaperonin GroES.

It is found in the cytoplasm. The catalysed reaction is ATP + H2O + a folded polypeptide = ADP + phosphate + an unfolded polypeptide.. Together with its co-chaperonin GroES, plays an essential role in assisting protein folding. The GroEL-GroES system forms a nano-cage that allows encapsulation of the non-native substrate proteins and provides a physical environment optimized to promote and accelerate protein folding. This Clostridium novyi (strain NT) protein is Chaperonin GroEL.